The primary structure comprises 77 residues: Large ribosomal subunit protein uL24 (77 aa).

It belongs to the universal ribosomal protein uL24 family. In terms of assembly, part of the 50S ribosomal subunit.

Functionally, one of two assembly initiator proteins, it binds directly to the 5'-end of the 23S rRNA, where it nucleates assembly of the 50S subunit. One of the proteins that surrounds the polypeptide exit tunnel on the outside of the subunit. The polypeptide is Large ribosomal subunit protein uL24 (Sulfurovum sp. (strain NBC37-1)).